Consider the following 180-residue polypeptide: Pyruvoyl-dependent arginine decarboxylase (180 aa).

S41 is subject to Pyruvic acid (Ser).

Belongs to the PdaD family. Requires pyruvate as cofactor.

The enzyme catalyses L-arginine + H(+) = agmatine + CO2. This Methanococcoides burtonii (strain DSM 6242 / NBRC 107633 / OCM 468 / ACE-M) protein is Pyruvoyl-dependent arginine decarboxylase.